The following is a 110-amino-acid chain: Acid stress chaperone HdeA (110 aa).

The first 21 residues, Met1–Ala21, serve as a signal peptide directing secretion. Cys39 and Cys87 form a disulfide bridge.

The protein belongs to the HdeA family.

It localises to the periplasm. Its function is as follows. Required for optimal acid stress protection. Exhibits a chaperone-like activity only at low pH by suppressing non-specifically the aggregation of denaturated periplasmic proteins. This Escherichia coli O157:H7 protein is Acid stress chaperone HdeA.